The primary structure comprises 783 residues: Cadherin-5 (783 aa).

An N-terminal signal peptide occupies residues 1–25 (MQALVMLLATGATYYLGLLAAAAAA). The propeptide occupies 26–45 (VNPGRPNTPGSLPAHRRQKR). 5 Cadherin domains span residues 44–149 (KRDW…WPVF), 150–256 (THRV…FPIF), 257–371 (TQNR…PPIF), 372–478 (QQPF…APEF), and 478–585 (FAKP…GEFT). At 46–599 (DWIWNQMHID…AAAQVGISIQ (554 aa)) the chain is on the extracellular side. Ca(2+) is bound by residues Glu-56 and Glu-57. Asn-59 carries an N-linked (GlcNAc...) asparagine glycan. Residues Asp-107, Glu-109, Asp-141, Val-142, Asn-143, Asp-144, and Asn-145 each coordinate Ca(2+). Asn-155 carries an N-linked (GlcNAc...) asparagine glycan. Positions 175, 177, 184, and 229 each coordinate Ca(2+). N-linked (GlcNAc...) asparagine glycosylation is found at Asn-361, Asn-441, and Asn-523. Residues 600–620 (ALVAIFLCILTFTVITLLIIL) traverse the membrane as a helical segment. The interval 621 to 660 (RRRLRKQARAHGKSVPEIHEQLVTYDEEGGGEMDTTSYDV) is required for interaction with PALS1. The Cytoplasmic segment spans residues 621-783 (RRRLRKQARA…GSDPQEELVY (163 aa)).

In terms of assembly, part of a complex composed of AMOTL2, MAGI1 and CDH5, within the complex AMOTL2 acts as a scaffold protein for the interaction of MAGI1 with CDH5. The complex is required for coupling actin fibers to cell junctions in endothelial cells. Within the complex AMOTL2 (via its N-terminus) interacts with CDH5. Interacts (via cadherin 5 domain) with PTPRB. Interacts with TRPC4. Interacts with KRIT1. Interacts with PARD3. Interacts with RTN4 (isoform B). Interacts with PALS1; the interaction promotes PALS1 localization to cell junctions and is required for CDH5-mediated vascular lumen formation and endothelial cell. Interacts with CTNND1/p120-catenin; the interaction controls CADH5 endocytosis. In terms of processing, phosphorylated on tyrosine residues by KDR/VEGFR-2. Dephosphorylated by PTPRB. Post-translationally, O-glycosylated.

Its subcellular location is the cell junction. The protein resides in the adherens junction. The protein localises to the cell membrane. It localises to the cytoplasm. Cadherins are calcium-dependent cell adhesion proteins. They preferentially interact with themselves in a homophilic manner in connecting cells; cadherins may thus contribute to the sorting of heterogeneous cell types. This cadherin may play a important role in endothelial cell biology through control of the cohesion and organization of the intercellular junctions. It associates with alpha-catenin forming a link to the cytoskeleton. Plays a role in coupling actin fibers to cell junctions in endothelial cells, via acting as a cell junctional complex anchor for AMOTL2 and MAGI1. Acts in concert with KRIT1 and PALS1 to establish and maintain correct endothelial cell polarity and vascular lumen. These effects are mediated by recruitment and activation of the Par polarity complex and RAP1B. Required for activation of PRKCZ and for localization of phosphorylated PRKCZ, PARD3, TIAM1 and RAP1B to the cell junction. Associates with CTNND1/p120-catenin to control CADH5 endocytosis. This is Cadherin-5 from Bos taurus (Bovine).